A 270-amino-acid chain; its full sequence is 4-hydroxy-4-methyl-2-oxoglutarate aldolase tasA (270 aa).

His49 acts as the Proton acceptor in catalysis. A divalent metal cation is bound by residues Glu156 and Asp182. Asp182 is a binding site for substrate.

The protein belongs to the HpcH/HpaI aldolase family. As to quaternary structure, homohexamer; trimer of dimers. It depends on Co(2+) as a cofactor. Mn(2+) is required as a cofactor. Requires Zn(2+) as cofactor. The cofactor is Fe(2+). Mg(2+) serves as cofactor.

The enzyme catalyses 4-hydroxy-4-methyl-2-oxoglutarate = 2 pyruvate. It functions in the pathway secondary metabolite biosynthesis. Functionally, 4-hydroxy-4-methyl-2-oxoglutarate aldolase; part of the gene cluster that mediates the biosynthesis of the tetramic acids Sch210971 and Sch210972, potential anti-HIV fungal natural product that contain a decalin core. The PKS module of tasS together with the enoylreductase tasC catalyze the formation of the polyketide unit which is then conjugated to 4-hydroxyl-4-methyl glutamate (HMG) by the condensation domain of the tasS NRPS module. One unique structural feature of Sch210971 and Sch210972 is the tetramic acid motif proposed to be derived from the non-proteinogenic amino acid HMG, by a Dieckmann-type condensation catalyzed by the reductase domain of tasS. The aldolase tasA catalyzes the aldol condensation of 2 molecules of pyruvic acid to yield the intermediate 4-hydroxyl-4-methyl-2-oxoglutarate (HMOG), which can then be stereoselectively transaminated, may be by tasG, to form HMG. The Diels-Alderase tas3 then uses the Dieckmann product of tasS as substrate and catalyzes the Diels-Alder cycloaddition to form the decalin ring of Sch210971 and Sch210972. The polypeptide is 4-hydroxy-4-methyl-2-oxoglutarate aldolase tasA (Hapsidospora irregularis).